The sequence spans 464 residues: UDP-N-acetylmuramate--L-alanine ligase (464 aa).

An ATP-binding site is contributed by 111–117 (GAHGKTT).

It belongs to the MurCDEF family.

It localises to the cytoplasm. It carries out the reaction UDP-N-acetyl-alpha-D-muramate + L-alanine + ATP = UDP-N-acetyl-alpha-D-muramoyl-L-alanine + ADP + phosphate + H(+). The protein operates within cell wall biogenesis; peptidoglycan biosynthesis. Its function is as follows. Cell wall formation. This Dictyoglomus turgidum (strain DSM 6724 / Z-1310) protein is UDP-N-acetylmuramate--L-alanine ligase.